The primary structure comprises 88 residues: MRLFIALPVLIVVVAMALEGPAPAQAAPDFSSAMESLPDKLKEFGNTLEDKARAAIEHIKQKEIMIKTRNWFSETLNKMKEKLKTTFA.

The first 26 residues, 1–26 (MRLFIALPVLIVVVAMALEGPAPAQA), serve as a signal peptide directing secretion.

It belongs to the apolipoprotein C1 family.

It is found in the secreted. In terms of biological role, inhibitor of lipoprotein binding to the low density lipoprotein (LDL) receptor, LDL receptor-related protein, and very low density lipoprotein (VLDL) receptor. Associates with high density lipoproteins (HDL) and the triacylglycerol-rich lipoproteins in the plasma and makes up about 10% of the protein of the VLDL and 2% of that of HDL. Appears to interfere directly with fatty acid uptake and is also the major plasma inhibitor of cholesteryl ester transfer protein (CETP). Binds free fatty acids and reduces their intracellular esterification. Modulates the interaction of APOE with beta-migrating VLDL and inhibits binding of beta-VLDL to the LDL receptor-related protein. This chain is Apolipoprotein C-I (Apoc1), found in Rattus norvegicus (Rat).